The following is a 71-amino-acid chain: Large ribosomal subunit protein bL31 (71 aa).

Zn(2+)-binding residues include cysteine 16, cysteine 18, cysteine 37, and cysteine 40.

It belongs to the bacterial ribosomal protein bL31 family. Type A subfamily. In terms of assembly, part of the 50S ribosomal subunit. It depends on Zn(2+) as a cofactor.

Binds the 23S rRNA. This chain is Large ribosomal subunit protein bL31, found in Pseudomonas entomophila (strain L48).